We begin with the raw amino-acid sequence, 223 residues long: Probable Ras-related protein Rab-4A (223 aa).

Residue 16–23 (GNAGTGKT) participates in GTP binding. Positions 38-46 (TQHTIGAEF) match the Effector region motif. GTP-binding positions include 64–68 (DTAGQ) and 122–125 (NKKD). 2 S-geranylgeranyl cysteine lipidation sites follow: C221 and C223. C223 carries the post-translational modification Cysteine methyl ester.

Belongs to the small GTPase superfamily. Rab family.

It localises to the cell membrane. Its function is as follows. Protein transport. Probably involved in vesicular traffic. The polypeptide is Probable Ras-related protein Rab-4A (Echinococcus multilocularis (Fox tapeworm)).